The primary structure comprises 166 residues: CDP-archaeol synthase (166 aa).

Helical transmembrane passes span 42–62 (LVLG…VQDA), 73–93 (VLSV…KSFV), 103–123 (AAWP…LLLI), and 128–148 (FAAV…TPLL).

The protein belongs to the CDP-archaeol synthase family. It depends on Mg(2+) as a cofactor.

The protein resides in the cell membrane. It catalyses the reaction 2,3-bis-O-(geranylgeranyl)-sn-glycerol 1-phosphate + CTP + H(+) = CDP-2,3-bis-O-(geranylgeranyl)-sn-glycerol + diphosphate. It functions in the pathway membrane lipid metabolism; glycerophospholipid metabolism. Catalyzes the formation of CDP-2,3-bis-(O-geranylgeranyl)-sn-glycerol (CDP-archaeol) from 2,3-bis-(O-geranylgeranyl)-sn-glycerol 1-phosphate (DGGGP) and CTP. This reaction is the third ether-bond-formation step in the biosynthesis of archaeal membrane lipids. The protein is CDP-archaeol synthase of Methanosphaerula palustris (strain ATCC BAA-1556 / DSM 19958 / E1-9c).